Reading from the N-terminus, the 137-residue chain is Probable glycine cleavage system H protein 1 (137 aa).

The 83-residue stretch at 31 to 113 (VAVIGITDYA…YGEGWIFKLK (83 aa)) folds into the Lipoyl-binding domain. Residue K72 is modified to N6-lipoyllysine.

It belongs to the GcvH family. The glycine cleavage system is composed of four proteins: P, T, L and H. (R)-lipoate is required as a cofactor.

Functionally, the glycine cleavage system catalyzes the degradation of glycine. The H protein shuttles the methylamine group of glycine from the P protein to the T protein. This chain is Probable glycine cleavage system H protein 1, found in Saccharolobus solfataricus (strain ATCC 35092 / DSM 1617 / JCM 11322 / P2) (Sulfolobus solfataricus).